The sequence spans 202 residues: Large ribosomal subunit protein bL17 (202 aa).

A disordered region spans residues 132-202 (DAAQKAASAG…TEVEKADDDK (71 aa)). Residues 134–168 (AQKAASAGAQEVTAAAAPQAAVEPEAVETEASAET) are compositionally biased toward low complexity. Residues 169-193 (AEAEVETAEVEAVDEASAEEADEAT) show a composition bias toward acidic residues.

This sequence belongs to the bacterial ribosomal protein bL17 family. In terms of assembly, part of the 50S ribosomal subunit. Contacts protein L32.

This is Large ribosomal subunit protein bL17 from Mycolicibacterium vanbaalenii (strain DSM 7251 / JCM 13017 / BCRC 16820 / KCTC 9966 / NRRL B-24157 / PYR-1) (Mycobacterium vanbaalenii).